A 916-amino-acid chain; its full sequence is Chitin synthase B (916 aa).

2 disordered regions span residues 1–84 and 114–141; these read MAYQ…AGFH and SPYA…GGGL. Residue N18 is glycosylated (N-linked (GlcNAc...) asparagine). The span at 60-75 shows a compositional bias: polar residues; the sequence is RGTSPVRPTSGYSLTE. An N-linked (GlcNAc...) asparagine glycan is attached at N546. 7 helical membrane passes run 572–594, 628–648, 663–683, 715–735, 743–763, 845–865, and 884–904; these read MFFL…FSLA, IINT…FILA, SFVV…YLVV, IIII…FMYL, SFPA…VYAF, LVTL…SDGM, and ALLW…CWFL.

It belongs to the chitin synthase family. Class III subfamily.

It is found in the cell membrane. It catalyses the reaction [(1-&gt;4)-N-acetyl-beta-D-glucosaminyl](n) + UDP-N-acetyl-alpha-D-glucosamine = [(1-&gt;4)-N-acetyl-beta-D-glucosaminyl](n+1) + UDP + H(+). In terms of biological role, polymerizes chitin, a structural polymer of the cell wall and septum, by transferring the sugar moiety of UDP-GlcNAc to the non-reducing end of the growing chitin polymer. Involved in hyphal growth and more particularly in branching. This chain is Chitin synthase B, found in Aspergillus oryzae (strain ATCC 42149 / RIB 40) (Yellow koji mold).